The primary structure comprises 429 residues: Putative chloride channel protein ClcB-like (429 aa).

Transmembrane regions (helical) follow at residues 1–21 (MLAI…AFRE), 44–64 (LPWW…GLTL), 146–166 (LLVA…PIAG), 168–188 (VFVC…PLLV), 200–220 (FFGY…GWEV), 221–241 (LTYL…LGLI), 259–279 (LALG…VWGN), 283–303 (VVNG…VLVC), 315–335 (GAVG…GLLY), 354–376 (AVVG…ILMI), and 383–405 (YQVV…ATGA).

It belongs to the chloride channel (TC 2.A.49) family. ClcB subfamily.

It is found in the cell inner membrane. This is Putative chloride channel protein ClcB-like from Ralstonia nicotianae (strain ATCC BAA-1114 / GMI1000) (Ralstonia solanacearum).